A 100-amino-acid chain; its full sequence is NADH-quinone oxidoreductase subunit K (100 aa).

Helical transmembrane passes span 4–24 (TSYY…GVLL), 29–49 (IVIF…LVAF), and 61–81 (IVFF…ALLV).

This sequence belongs to the complex I subunit 4L family. As to quaternary structure, NDH-1 is composed of 14 different subunits. Subunits NuoA, H, J, K, L, M, N constitute the membrane sector of the complex.

It is found in the cell membrane. It carries out the reaction a quinone + NADH + 5 H(+)(in) = a quinol + NAD(+) + 4 H(+)(out). Functionally, NDH-1 shuttles electrons from NADH, via FMN and iron-sulfur (Fe-S) centers, to quinones in the respiratory chain. The immediate electron acceptor for the enzyme in this species is believed to be ubiquinone. Couples the redox reaction to proton translocation (for every two electrons transferred, four hydrogen ions are translocated across the cytoplasmic membrane), and thus conserves the redox energy in a proton gradient. The chain is NADH-quinone oxidoreductase subunit K from Chloroflexus aggregans (strain MD-66 / DSM 9485).